A 167-amino-acid polypeptide reads, in one-letter code: Lipoprotein signal peptidase (167 aa).

4 helical membrane-spanning segments follow: residues 5–25 (ICSTGLRWLWLVVVVLILDLG), 42–62 (LIPYFNLTYAQNFGAAFSFLA), 70–90 (WFFAFIAVAISVVLMVMMYRA), and 102–122 (ALIIGGALGNLFDRLVHGFVI). Catalysis depends on residues Asp-123 and Asp-141. The helical transmembrane segment at 137-157 (FNIADMAICIGAGLVIIDSFL) threads the bilayer.

This sequence belongs to the peptidase A8 family.

The protein resides in the cell inner membrane. The catalysed reaction is Release of signal peptides from bacterial membrane prolipoproteins. Hydrolyzes -Xaa-Yaa-Zaa-|-(S,diacylglyceryl)Cys-, in which Xaa is hydrophobic (preferably Leu), and Yaa (Ala or Ser) and Zaa (Gly or Ala) have small, neutral side chains.. Its pathway is protein modification; lipoprotein biosynthesis (signal peptide cleavage). Functionally, this protein specifically catalyzes the removal of signal peptides from prolipoproteins. This chain is Lipoprotein signal peptidase, found in Photorhabdus laumondii subsp. laumondii (strain DSM 15139 / CIP 105565 / TT01) (Photorhabdus luminescens subsp. laumondii).